The primary structure comprises 450 residues: Sorting nexin-4 (450 aa).

At methionine 1 the chain carries N-acetylmethionine. A disordered region spans residues 1–46; it reads MEQAPPDPEKLLQPGPLEPLGGPGAVLEAAVGEENEGTREDGSGVD. Residues 11-20 are compositionally biased toward low complexity; the sequence is LLQPGPLEPL. In terms of domain architecture, PX spans 61–187; sequence SVSEAEKRTG…YSFLTQEGNW (127 aa). Positions 106, 108, 132, and 154 each coordinate a 1,2-diacyl-sn-glycero-3-phospho-(1D-myo-inositol-3-phosphate).

The protein belongs to the sorting nexin family. Heterodimer; heterodimerizes with SNX7 or SNX30. Interacts with WWC1/KIBRA. Identified in a complex with WWC1/KIBRA and dynein components DYNLL1 and DYNC1I2. Interacts with BIN1.

The protein resides in the early endosome. It is found in the early endosome membrane. Involved in the regulation of endocytosis and in several stages of intracellular trafficking. Plays a role in recycling endocytosed transferrin receptor and prevent its degradation. Involved in autophagosome assembly by regulating trafficking and recycling of phospholipid scramblase ATG9A. This Mus musculus (Mouse) protein is Sorting nexin-4.